The following is a 522-amino-acid chain: Poly(A) polymerase (522 aa).

Residues 63–65 (YGS), 76–78 (DID), Asp-130, Lys-193, Tyr-202, and 211–212 (GI) contribute to the ATP site. Residues Asp-76, Asp-78, and Asp-130 each contribute to the Mg(2+) site. The disordered stretch occupies residues 475–522 (QLKAKEENSIPNEEKKEQLKKEMKQEANTIVKNSSTDDDFMKRFTRKN). Residues 476-499 (LKAKEENSIPNEEKKEQLKKEMKQ) are compositionally biased toward basic and acidic residues.

This sequence belongs to the poly(A) polymerase family. Mg(2+) serves as cofactor. Requires Mn(2+) as cofactor.

The protein localises to the cytoplasm. It is found in the nucleus. The enzyme catalyses RNA(n) + ATP = RNA(n)-3'-adenine ribonucleotide + diphosphate. In terms of biological role, polymerase that creates the 3'-poly(A) tail of mRNA's. May acquire specificity through interaction with a cleavage and polyadenylation factor. This Entamoeba histolytica (strain ATCC 30459 / HM-1:IMSS / ABRM) protein is Poly(A) polymerase.